We begin with the raw amino-acid sequence, 135 residues long: CDGSH iron-sulfur domain-containing protein 2A (135 aa).

At 1-37 (MVLETISRIIKIQLPAYLKKLPLPETIGGFARLTVSE) the chain is on the lumenal side. Residues 38–60 (WLRLLPLLGILALLGYLTIRPFL) form a helical membrane-spanning segment. The Cytoplasmic portion of the chain corresponds to 61–135 (PKKKKQKDSL…GPLILKKKIL (75 aa)). 4 residues coordinate [2Fe-2S] cluster: Cys-99, Cys-101, Cys-110, and His-114.

The protein belongs to the CISD protein family. CISD2 subfamily. As to quaternary structure, homodimer. It depends on [2Fe-2S] cluster as a cofactor.

The protein localises to the endoplasmic reticulum membrane. It is found in the mitochondrion outer membrane. In terms of biological role, regulator of autophagy that contributes to antagonize becn1-mediated cellular autophagy at the endoplasmic reticulum. Participates in the interaction of bcl2 with becn1 and is required for bcl2-mediated depression of endoplasmic reticulum Ca(2+) stores during autophagy. The chain is CDGSH iron-sulfur domain-containing protein 2A (cisd2a) from Salmo salar (Atlantic salmon).